A 337-amino-acid chain; its full sequence is uncharacterized protein (337 aa).

A coiled-coil region spans residues 248-276; that stretch reads NELKAETTIQVLREQLRQEKKLKEQVLSL. Residues 285–337 are disordered; it reads GGRGEEFGKPDETPSSASVGDDNFPSSTNHTFEARRRPSSLSSGGALKPSKIL. The segment covering 287–296 has biased composition (basic and acidic residues); the sequence is RGEEFGKPDE. A compositionally biased stretch (polar residues) spans 297–315; that stretch reads TPSSASVGDDNFPSSTNHT.

This is an uncharacterized protein from Invertebrate iridescent virus 3 (IIV-3).